A 370-amino-acid polypeptide reads, in one-letter code: Nociceptin receptor (370 aa).

Topologically, residues 1–48 are extracellular; that stretch reads MESLFPAPFWEVLYGSPLQGNLSLLSPNHSLLPPHLLLNASHGAFLPL. N-linked (GlcNAc...) asparagine glycans are attached at residues N21, N28, and N39. The helical transmembrane segment at 49–74 threads the bilayer; that stretch reads GLKVTIVGLYLAVCVGGLLGNCLVMY. The Cytoplasmic portion of the chain corresponds to 75 to 87; it reads VILRHTKMKTATN. A helical transmembrane segment spans residues 88–109; sequence IYIFNLALADTAVLLTLPFQGT. The Extracellular segment spans residues 110 to 124; the sequence is DVLLGFWPFGNALCK. C123 and C200 are disulfide-bonded. Residues 125–146 form a helical membrane-spanning segment; sequence AVIAIDYYNMFTSAFTLTAMSV. Over 147–165 the chain is Cytoplasmic; that stretch reads DRYVAICHPIRALDVRTSS. A helical membrane pass occupies residues 166-188; it reads KAQAVNVAIWALASIVGVPVAIM. Residues 189–211 lie on the Extracellular side of the membrane; sequence GSAQVEDEEIECLVEIPAPQDYW. Residues 212 to 236 traverse the membrane as a helical segment; the sequence is GPVFAVCIFLFSFVIPVLIISVCYS. Residues 237–264 lie on the Cytoplasmic side of the membrane; the sequence is LMVRRLRGVRLLSGSREKDRNLRRITRL. The chain crosses the membrane as a helical span at residues 265-285; it reads VLVVVAVFVGCWTPVQVFVLV. The Extracellular portion of the chain corresponds to 286-300; that stretch reads QGLGVQPGSETAVAV. A helical membrane pass occupies residues 301 to 322; it reads LRFCTALGYVNSCLNPILYAFL. The Cytoplasmic portion of the chain corresponds to 323–370; sequence DENFKACFRKFCCAPTRRREMQVSDRVRSIAKDVALACKTSETVPRPA. C334 is lipidated: S-palmitoyl cysteine.

It belongs to the G-protein coupled receptor 1 family. Post-translationally, phosphorylation at Ser-363 requires GRK3. As to expression, detected in brain cortex, stomach, ileum, jejunum and colon.

The protein localises to the cell membrane. The protein resides in the cytoplasmic vesicle. Its function is as follows. G-protein coupled opioid receptor that functions as a receptor for the endogenous neuropeptide nociceptin. Ligand binding causes a conformation change that triggers signaling via guanine nucleotide-binding proteins (G proteins) and modulates the activity of down-stream effectors. Signaling via G proteins mediates inhibition of adenylate cyclase activity and calcium channel activity. Arrestins modulate signaling via G proteins and mediate the activation of alternative signaling pathways that lead to the activation of MAP kinases. Plays a role in modulating nociception and the perception of pain. Plays a role in the regulation of locomotor activity by the neuropeptide nociceptin. In Sus scrofa (Pig), this protein is Nociceptin receptor (OPRL1).